A 134-amino-acid chain; its full sequence is Large ribosomal subunit protein uL16c (134 aa).

The protein belongs to the universal ribosomal protein uL16 family. In terms of assembly, part of the 50S ribosomal subunit.

It localises to the plastid. It is found in the chloroplast. The protein is Large ribosomal subunit protein uL16c of Solanum lycopersicum (Tomato).